We begin with the raw amino-acid sequence, 204 residues long: Flavin-dependent thymidylate synthase (204 aa).

Positions 1–204 constitute a ThyX domain; the sequence is MTVTLMQHTS…RYLFCLNQEG (204 aa). Residues S50 and 74 to 76 each bind FAD; that span reads RHR. DUMP contacts are provided by residues 71-74, 84-86, and K143; these read ELAR and SSR. The short motif at 74-84 is the ThyX motif element; sequence RHRIASLSVKS. Residues 159-161 and N165 each bind FAD; that span reads NAR. R170 contributes to the dUMP binding site. R170 (involved in ionization of N3 of dUMP, leading to its activation) is an active-site residue.

It belongs to the thymidylate synthase ThyX family. As to quaternary structure, homotetramer. The cofactor is FAD.

It carries out the reaction dUMP + (6R)-5,10-methylene-5,6,7,8-tetrahydrofolate + NADPH + H(+) = dTMP + (6S)-5,6,7,8-tetrahydrofolate + NADP(+). It participates in pyrimidine metabolism; dTTP biosynthesis. Catalyzes the reductive methylation of 2'-deoxyuridine-5'-monophosphate (dUMP) to 2'-deoxythymidine-5'-monophosphate (dTMP) while utilizing 5,10-methylenetetrahydrofolate (mTHF) as the methyl donor, and NADPH and FADH(2) as the reductant. The protein is Flavin-dependent thymidylate synthase of Wolinella succinogenes (strain ATCC 29543 / DSM 1740 / CCUG 13145 / JCM 31913 / LMG 7466 / NCTC 11488 / FDC 602W) (Vibrio succinogenes).